Here is a 368-residue protein sequence, read N- to C-terminus: High affinity transport system protein p37 (368 aa).

Positions 1–25 are cleaved as a signal peptide; that stretch reads MLFKKFTWVIPSLFLTIISTSLLIS. Cys-26 is lipidated: N-palmitoyl cysteine. The S-diacylglycerol cysteine moiety is linked to residue Cys-26.

The protein localises to the cell membrane. Its function is as follows. P37 is part of a high-affinity transport system. This is High affinity transport system protein p37 (p37) from Mycoplasma genitalium (strain ATCC 33530 / DSM 19775 / NCTC 10195 / G37) (Mycoplasmoides genitalium).